The chain runs to 283 residues: Large ribosomal subunit protein uL2 (283 aa).

2 disordered regions span residues 37 to 59 (AKKK…RGGG) and 219 to 283 (HKGI…RNSK). Basic residues predominate over residues 256-269 (WGKRHMGVKTRNNK).

The protein belongs to the universal ribosomal protein uL2 family. Part of the 50S ribosomal subunit. Forms a bridge to the 30S subunit in the 70S ribosome.

Functionally, one of the primary rRNA binding proteins. Required for association of the 30S and 50S subunits to form the 70S ribosome, for tRNA binding and peptide bond formation. It has been suggested to have peptidyltransferase activity; this is somewhat controversial. Makes several contacts with the 16S rRNA in the 70S ribosome. This chain is Large ribosomal subunit protein uL2, found in Mycoplasmoides gallisepticum (strain R(low / passage 15 / clone 2)) (Mycoplasma gallisepticum).